Reading from the N-terminus, the 191-residue chain is Large ribosomal subunit protein bL9 (191 aa).

This sequence belongs to the bacterial ribosomal protein bL9 family.

In terms of biological role, binds to the 23S rRNA. The polypeptide is Large ribosomal subunit protein bL9 (Granulibacter bethesdensis (strain ATCC BAA-1260 / CGDNIH1)).